The chain runs to 240 residues: Poxin (240 aa).

His46 acts as the Proton donor in catalysis. Residue Tyr181 is the Shared with catalytic histidine of dimeric partner of the active site. The active-site Proton acceptor; shared with catalytic histidine of dimeric partner is the Lys185.

Belongs to the poxin family. In terms of assembly, homodimer.

It carries out the reaction 2',3'-cGAMP + H2O = Gp(2'-5')Ap(3') + H(+). In terms of biological role, nuclease that cleaves host 2',3'-cGAMP. In Bombyx mori (Silk moth), this protein is Poxin (p26).